The chain runs to 329 residues: tRNA dimethylallyltransferase (329 aa).

Position 24–31 (24–31 (GSTGIGKT)) interacts with ATP. Substrate is bound at residue 26–31 (TGIGKT). Residues 49-52 (DSMQ) form an interaction with substrate tRNA region.

Belongs to the IPP transferase family. In terms of assembly, monomer. Mg(2+) serves as cofactor.

The enzyme catalyses adenosine(37) in tRNA + dimethylallyl diphosphate = N(6)-dimethylallyladenosine(37) in tRNA + diphosphate. Functionally, catalyzes the transfer of a dimethylallyl group onto the adenine at position 37 in tRNAs that read codons beginning with uridine, leading to the formation of N6-(dimethylallyl)adenosine (i(6)A). The protein is tRNA dimethylallyltransferase of Methylacidiphilum infernorum (isolate V4) (Methylokorus infernorum (strain V4)).